The sequence spans 1881 residues: Ankyrin-1 (1881 aa).

The tract at residues 1–827 is 89 kDa domain; sequence MPYSVGFREA…EDEGEELISF (827 aa). ANK repeat units lie at residues 44–73, 77–106, 110–139, 143–172, 174–201, 205–234, 238–267, 271–300, 304–333, 337–366, 370–399, 403–432, 436–465, 469–498, 502–531, 535–564, 568–597, 601–630, 634–663, 667–696, 700–729, 733–762, and 766–795; these read NGLN…ILET, KGNT…NVNA, KGFT…NQNV, DGFT…KGKV, LPAL…NPDV, TGFT…SVNF, NGIT…QIET, DELT…PIQA, NGLS…EIDD, DHLT…KPNS, NGFT…SIDA, SGLT…SPNV, KVET…KVNA, DDQT…NPNL, AGHT…SQAC, KGFT…HPNA, NGLT…SPHS, NGYT…SANA, QGVT…NGNL, SGLT…MVDA, MGYT…DVNA, LGYS…SPNE, and DGTT…ETSF. Asparagine 105 is subject to (3S)-3-hydroxyasparagine; by HIF1AN; partial. At asparagine 233 the chain carries (3S)-3-hydroxyasparagine; by HIF1AN; partial. At serine 429 the chain carries Phosphoserine. 2 positions are modified to (3S)-3-hydroxyasparagine; by HIF1AN; partial: asparagine 431 and asparagine 464. Residues asparagine 629 and asparagine 662 each carry the (3S)-3-hydroxyasparagine; by HIF1AN; partial modification. At aspartate 695 the chain carries (3S)-3-hydroxyaspartate; by HIF1AN; partial. The residue at position 728 (asparagine 728) is a (3S)-3-hydroxyasparagine; by HIF1AN; partial. Serine 759 carries the post-translational modification Phosphoserine. Asparagine 761 carries the (3S)-3-hydroxyasparagine; by HIF1AN; partial modification. Serine 781, serine 817, serine 834, and serine 856 each carry phosphoserine. The segment at 875-904 is disordered; that stretch reads EEQEQASKEYDEDSLIPSSPATETSDNISP. The segment covering 890-904 has biased composition (polar residues); sequence IPSSPATETSDNISP. ZU5 domains lie at 913–1068 and 1070–1216; these read FLVS…IMSR and CQDY…LSDC. Residue threonine 961 is modified to Phosphothreonine. Position 1073 is a phosphotyrosine (tyrosine 1073). Serine 1082 bears the Phosphoserine mark. Positions 1234–1362 are UPA domain; sequence TAVPYMAKFV…QHILCHLNIT (129 aa). Threonine 1378 and threonine 1380 each carry phosphothreonine. The tract at residues 1383–1881 is 55 kDa regulatory domain; that stretch reads ALRYSILSES…SKDHTSTPNP (499 aa). 3 positions are modified to phosphoserine: serine 1390, serine 1392, and serine 1396. Phosphothreonine is present on threonine 1400. Positions 1403-1487 constitute a Death domain; sequence AEMKMAVISE…EIVNMLEGSG (85 aa). Residues serine 1428 and serine 1486 each carry the phosphoserine modification. Positions 1486 to 1510 are disordered; it reads SGRQSRNLKPDRRHTDRDYSLSPSQ. The span at 1493–1504 shows a compositional bias: basic and acidic residues; it reads LKPDRRHTDRDY. 2 positions are modified to phosphoserine: serine 1523 and serine 1533. The tract at residues 1583 to 1613 is disordered; sequence SSLECSKAEDSDATGHEWKLEGALSEEPRGP. A compositionally biased stretch (basic and acidic residues) spans 1588–1612; it reads SKAEDSDATGHEWKLEGALSEEPRG. Position 1617 is a phosphoserine (serine 1617). Disordered stretches follow at residues 1637–1703, 1718–1791, and 1840–1859; these read LLEQ…LQDW, QGSW…EAKN, and ADAA…EDPS. A compositionally biased stretch (basic and acidic residues) spans 1642–1658; sequence EGQRSEEKLPGSKRQDD. 5 positions are modified to phosphoserine: serine 1666, serine 1671, serine 1686, serine 1690, and serine 1696. Residues 1683–1694 show a composition bias toward polar residues; the sequence is ITHSPTVSQVTE. 2 stretches are compositionally biased toward polar residues: residues 1718-1739 and 1758-1771; these read QGSW…STMT and SEHT…AESS. Residues 1772–1781 are compositionally biased toward basic and acidic residues; the sequence is QADRDRRQQG.

As to quaternary structure, component of the ankyrin-1 complex in the erythrocyte, composed of ANK1, RHCE, RHAG, SLC4A1, EPB42, GYPA, GYPB and AQP1. Interacts with a number of integral membrane proteins and cytoskeletal proteins. Interacts (via N-terminus) with SPTB/spectrin (beta chain). Also interacts with TTN/titin. Isoform Mu17 interacts with OBSCN isoform 3/obscurin. Interacts with HIF1AN. Interacts (via ANK 1-5 repeats) with RHCE; this interaction mediates the primary membrane attachment site for ANK1. Interacts (via ANK 1-2 repeats) with AQP1 (via the N-terminal). Interacts (via ANK 1-13 repeats) with EPB42. Interacts directly with SLC4A1 (via the cytoplasmic domain); this interaction is mediated by the SLC4A1 Band 3-II and Band 3-III dimers. Regulated by phosphorylation. In terms of processing, palmitoylated. Post-translationally, hydroxylated by HIF1AN at several asparagine and 1 aspartate residue within ANK repeat region. Hydroxylation seems to increase the conformational stability of this region and may also modulate protein-protein interactions mediated by the ANK repeat region. (Microbial infection) Probably cleaved by P.falciparum SERA6; the cleavage probably causes the disruption of the actin cytoskeleton and the rupture of the erythrocyte cell membrane releasing the merozoites. Isoform Mu17, isoform Mu18, isoform Mu19 and isoform Mu20 are expressed in skeletal muscle. Isoform Br21 is expressed in brain.

The protein resides in the cytoplasm. It localises to the cytoskeleton. Its subcellular location is the membrane. The protein localises to the myofibril. It is found in the sarcomere. The protein resides in the m line. It localises to the sarcoplasmic reticulum. Its function is as follows. Component of the ankyrin-1 complex, a multiprotein complex involved in the stability and shape of the erythrocyte membrane. Attaches integral membrane proteins to cytoskeletal elements; binds to the erythrocyte membrane protein band 4.2, to Na-K ATPase, to the lymphocyte membrane protein GP85, and to the cytoskeletal proteins fodrin, tubulin, vimentin and desmin. Erythrocyte ankyrins also link spectrin (beta chain) to the cytoplasmic domain of the erythrocytes anion exchange protein; they retain most or all of these binding functions. Functionally, together with obscurin in skeletal muscle may provide a molecular link between the sarcoplasmic reticulum and myofibrils. This chain is Ankyrin-1, found in Homo sapiens (Human).